Here is a 184-residue protein sequence, read N- to C-terminus: Muscle-specific protein 20 (184 aa).

Positions 17-122 constitute a Calponin-homology (CH) domain; sequence PEMDKEAQEW…NTIFALGRAT (106 aa). The stretch at 157 to 181 is one Calponin-like repeat; that stretch reads VGLQAGSNKGATQAGQNLGAGRKIL.

The protein belongs to the calponin family. In terms of tissue distribution, found in synchronous muscle; not found in asynchronous indirect flight muscle.

This is Muscle-specific protein 20 (Mp20) from Drosophila melanogaster (Fruit fly).